Reading from the N-terminus, the 163-residue chain is MSIPFSNTHYRIPQGFGNLLEGLTREILREQPDNIPAFAAAYFESLLEKREKTNFDPAEWGSKVEDRFYNNHAFEEQEPPEKSDPKQEESQVSGKEEETSVTILDSSEEDKEKEEVAAVKIQAAFRGHVAREEVKKMKTDSLQNEEKEENSEDTGFTSRTHEK.

Disordered regions lie at residues 57–115 (PAEW…EKEE) and 129–163 (VARE…THEK). 2 stretches are compositionally biased toward basic and acidic residues: residues 62–98 (SKVE…KEEE) and 129–139 (VAREEVKKMKT). The IQ domain occupies 114 to 143 (EEVAAVKIQAAFRGHVAREEVKKMKTDSLQ). Positions 153–163 (DTGFTSRTHEK) are enriched in polar residues.

As to quaternary structure, homodimer. May interact with ROPN1. Testis- and sperm-specific.

The protein resides in the membrane. Sperm surface zona pellucida binding protein. Helps to bind spermatozoa to the zona pellucida with high affinity. Might function in binding zona pellucida and carbohydrates. The sequence is that of Sperm surface protein Sp17 (SPA17) from Papio hamadryas (Hamadryas baboon).